A 295-amino-acid polypeptide reads, in one-letter code: GTPase Era (295 aa).

The 170-residue stretch at 7 to 176 (KTVSVCIIGR…ITSKAKIAPW (170 aa)) folds into the Era-type G domain. Positions 15–22 (GRPNSGKS) are G1. A GTP-binding site is contributed by 15-22 (GRPNSGKS). The interval 41-45 (QTTRS) is G2. The segment at 62–65 (DTPG) is G3. GTP is bound by residues 62–66 (DTPGI) and 124–127 (NKIE). The interval 124-127 (NKIE) is G4. A G5 region spans residues 152-154 (ISA). The region spanning 204-281 (LQQELPYKLT…HLFLFVKVRE (78 aa)) is the KH type-2 domain.

The protein belongs to the TRAFAC class TrmE-Era-EngA-EngB-Septin-like GTPase superfamily. Era GTPase family. Monomer.

Its subcellular location is the cytoplasm. It is found in the cell inner membrane. Its function is as follows. An essential GTPase that binds both GDP and GTP, with rapid nucleotide exchange. Plays a role in 16S rRNA processing and 30S ribosomal subunit biogenesis and possibly also in cell cycle regulation and energy metabolism. In Rickettsia canadensis (strain McKiel), this protein is GTPase Era.